A 294-amino-acid polypeptide reads, in one-letter code: MKIAVFGQFYQNSTSPIIARLFAFLNQNNIQVVIEEKFAAILIENKSIANTYQKFSSHKDLDKSFEMLISVGGDGTFLRATTLVRNSGIPILGINAGRLGFLATVQQENIETFLQLVLEKKYTISKRTLLSLKCASKIEEIKDLNFAMNEITVSRKDTTSMITIETYLNGEYLNSYWADGLIISTPTGSTGYSMSCGGPILTPEANCLVITPIAPHNLNARPLVIPDNTEIKLKVSGREENYLVSLDSRIASVKNEDILTIKKTPFKINMIEIPEETFLKTLRNKLLWGEDKRN.

Residue Asp74 is the Proton acceptor of the active site. Residues 74–75 (DG), Arg79, 149–150 (NE), Asp179, 190–195 (TGYSMS), and Ala214 contribute to the NAD(+) site.

The protein belongs to the NAD kinase family. A divalent metal cation serves as cofactor.

Its subcellular location is the cytoplasm. The catalysed reaction is NAD(+) + ATP = ADP + NADP(+) + H(+). Functionally, involved in the regulation of the intracellular balance of NAD and NADP, and is a key enzyme in the biosynthesis of NADP. Catalyzes specifically the phosphorylation on 2'-hydroxyl of the adenosine moiety of NAD to yield NADP. This Flavobacterium psychrophilum (strain ATCC 49511 / DSM 21280 / CIP 103535 / JIP02/86) protein is NAD kinase.